Here is a 213-residue protein sequence, read N- to C-terminus: Large ribosomal subunit protein uL1 (213 aa).

Belongs to the universal ribosomal protein uL1 family. As to quaternary structure, part of the 50S ribosomal subunit.

Functionally, binds directly to 23S rRNA. Probably involved in E site tRNA release. In terms of biological role, protein L1 is also a translational repressor protein, it controls the translation of its operon by binding to its mRNA. In Methanococcus maripaludis (strain DSM 14266 / JCM 13030 / NBRC 101832 / S2 / LL), this protein is Large ribosomal subunit protein uL1.